A 453-amino-acid polypeptide reads, in one-letter code: Pup--protein ligase (453 aa).

Glu9 contributes to the Mg(2+) binding site. Arg53 is a binding site for ATP. Tyr55 is a binding site for Mg(2+). Asp57 acts as the Proton acceptor in catalysis. Glu63 is a binding site for Mg(2+). Residues Thr66 and Trp420 each coordinate ATP.

The protein belongs to the Pup ligase/Pup deamidase family. Pup-conjugating enzyme subfamily.

The enzyme catalyses ATP + [prokaryotic ubiquitin-like protein]-L-glutamate + [protein]-L-lysine = ADP + phosphate + N(6)-([prokaryotic ubiquitin-like protein]-gamma-L-glutamyl)-[protein]-L-lysine.. It participates in protein degradation; proteasomal Pup-dependent pathway. It functions in the pathway protein modification; protein pupylation. Catalyzes the covalent attachment of the prokaryotic ubiquitin-like protein modifier Pup to the proteasomal substrate proteins, thereby targeting them for proteasomal degradation. This tagging system is termed pupylation. The ligation reaction involves the side-chain carboxylate of the C-terminal glutamate of Pup and the side-chain amino group of a substrate lysine. This Nocardioides sp. (strain ATCC BAA-499 / JS614) protein is Pup--protein ligase.